The primary structure comprises 500 residues: Aspartyl/glutamyl-tRNA(Asn/Gln) amidotransferase subunit B (500 aa).

It belongs to the GatB/GatE family. GatB subfamily. In terms of assembly, heterotrimer of A, B and C subunits.

It carries out the reaction L-glutamyl-tRNA(Gln) + L-glutamine + ATP + H2O = L-glutaminyl-tRNA(Gln) + L-glutamate + ADP + phosphate + H(+). It catalyses the reaction L-aspartyl-tRNA(Asn) + L-glutamine + ATP + H2O = L-asparaginyl-tRNA(Asn) + L-glutamate + ADP + phosphate + 2 H(+). Functionally, allows the formation of correctly charged Asn-tRNA(Asn) or Gln-tRNA(Gln) through the transamidation of misacylated Asp-tRNA(Asn) or Glu-tRNA(Gln) in organisms which lack either or both of asparaginyl-tRNA or glutaminyl-tRNA synthetases. The reaction takes place in the presence of glutamine and ATP through an activated phospho-Asp-tRNA(Asn) or phospho-Glu-tRNA(Gln). The chain is Aspartyl/glutamyl-tRNA(Asn/Gln) amidotransferase subunit B from Clavibacter sepedonicus (Clavibacter michiganensis subsp. sepedonicus).